A 314-amino-acid chain; its full sequence is SERTA domain-containing protein 2 (314 aa).

Positions Tyr33–Gly80 constitute an SERTA domain. Disordered stretches follow at residues Lys77–Asp119 and Pro181–Met222. The segment covering Thr87–Ser97 has biased composition (polar residues). Residues Thr182–Thr193 show a composition bias toward low complexity. A compositionally biased stretch (basic and acidic residues) spans Gly210–Leu221. The tract at residues Thr235–Leu311 is required for transactivation activity. Positions Leu238 to Leu243 match the Nuclear export signal (NES) motif.

In terms of assembly, interacts with XPO1; which mediates nuclear export. Interacts with TFDP1; modulates transactivation activity of TFDP1/E2F complexes. In terms of processing, polyubiquitinated, which promotes proteasomal degradation. Expressed in adipose tissue.

Its subcellular location is the nucleus. The protein resides in the cytoplasm. Functionally, acts at E2F-responsive promoters as coregulator to integrate signals provided by PHD- and/or bromodomain-containing transcription factors. May act as coactivator as well as corepressor of E2F1-TFDP1 and E2F4-TFDP1 complexes on E2F consensus binding sites, which would activate or inhibit E2F-target genes expression. Modulates fat storage by down-regulating the expression of key genes involved in adipocyte lipolysis, thermogenesis and oxidative metabolism. The polypeptide is SERTA domain-containing protein 2 (SERTAD2) (Homo sapiens (Human)).